The following is a 101-amino-acid chain: Small ribosomal subunit protein uS14 (101 aa).

The segment at 33-69 (SQDASYEEKIDASTKLQKLPRDSSPSRHRNRCELSGR) is disordered. Residues 51–68 (LPRDSSPSRHRNRCELSG) are compositionally biased toward basic and acidic residues.

The protein belongs to the universal ribosomal protein uS14 family. In terms of assembly, part of the 30S ribosomal subunit. Contacts proteins S3 and S10.

Functionally, binds 16S rRNA, required for the assembly of 30S particles and may also be responsible for determining the conformation of the 16S rRNA at the A site. The protein is Small ribosomal subunit protein uS14 of Xanthomonas axonopodis pv. citri (strain 306).